Here is a 157-residue protein sequence, read N- to C-terminus: MSENEQAAKAEAPIFHVVKLYLKDLSFESPNAPESFSVESEPKAEFNLDTKATQKDDDHYEVSLEVNVKVASGDGKILFMAEVSYGGLFMVKNVPSEHIPMVLGIDCPNILFPYVRQVISSVVLEGGYKPMVLDPINFAALFHHAQQQKAAQQGEKA.

Belongs to the SecB family. Homotetramer, a dimer of dimers. One homotetramer interacts with 1 SecA dimer.

The protein resides in the cytoplasm. Its function is as follows. One of the proteins required for the normal export of preproteins out of the cell cytoplasm. It is a molecular chaperone that binds to a subset of precursor proteins, maintaining them in a translocation-competent state. It also specifically binds to its receptor SecA. This chain is Protein-export protein SecB, found in Magnetococcus marinus (strain ATCC BAA-1437 / JCM 17883 / MC-1).